The following is a 122-amino-acid chain: Crustacean hyperglycemic hormones 7 (122 aa).

A signal peptide spans 1–26 (MSLAMTAFRMMAVALVVVVASSTTWA). 3 disulfides stabilise this stretch: cysteine 55-cysteine 91, cysteine 71-cysteine 87, and cysteine 74-cysteine 100. Valine 120 carries the post-translational modification Valine amide.

The protein belongs to the arthropod CHH/MIH/GIH/VIH hormone family. Produced by the medulla terminalis X-organ in the eyestalks and transported to the sinus gland where they are stored and released.

The protein resides in the secreted. Hormone found in the sinus gland of isopods and decapods which controls the blood sugar level. Has a secretagogue action over the amylase released from the midgut gland. May act as a stress hormone and may be involved in the control of molting and reproduction. The protein is Crustacean hyperglycemic hormones 7 of Penaeus japonicus (Kuruma prawn).